Reading from the N-terminus, the 97-residue chain is RxLR effector protein CRE10 (97 aa).

An N-terminal signal peptide occupies residues 1 to 21; the sequence is MRLSYILVVVIAVTLQACVCA. Residues 48–66 carry the RxLR-dEER motif; that stretch reads RLLRGVKKRTAEREVQEER.

It belongs to the RxLR effector family.

Its subcellular location is the secreted. The protein localises to the host cell. Its function is as follows. Effector that is involved in host plant infection. Contributes to virulence during the early infection stage, by inhibiting plant defense responses induced by both PAMP-triggered immunity (PTI) and effector-triggered immunity (ETI). The polypeptide is RxLR effector protein CRE10 (Phytophthora infestans (strain T30-4) (Potato late blight agent)).